A 347-amino-acid chain; its full sequence is UDP-3-O-acylglucosamine N-acyltransferase (347 aa).

The Proton acceptor role is filled by histidine 241.

Belongs to the transferase hexapeptide repeat family. LpxD subfamily. As to quaternary structure, homotrimer.

It catalyses the reaction a UDP-3-O-[(3R)-3-hydroxyacyl]-alpha-D-glucosamine + a (3R)-hydroxyacyl-[ACP] = a UDP-2-N,3-O-bis[(3R)-3-hydroxyacyl]-alpha-D-glucosamine + holo-[ACP] + H(+). The protein operates within bacterial outer membrane biogenesis; LPS lipid A biosynthesis. Functionally, catalyzes the N-acylation of UDP-3-O-acylglucosamine using 3-hydroxyacyl-ACP as the acyl donor. Is involved in the biosynthesis of lipid A, a phosphorylated glycolipid that anchors the lipopolysaccharide to the outer membrane of the cell. The chain is UDP-3-O-acylglucosamine N-acyltransferase from Nitrosococcus oceani (strain ATCC 19707 / BCRC 17464 / JCM 30415 / NCIMB 11848 / C-107).